We begin with the raw amino-acid sequence, 290 residues long: Forkhead box protein O3B (290 aa).

Disordered stretches follow at residues 1–30 (METD…TEEG) and 44–239 (AAAA…SSRR). 2 stretches are compositionally biased toward low complexity: residues 44–59 (AAAA…RGVH) and 75–91 (RTPA…EAPA). The residue at position 117 (threonine 117) is a Phosphothreonine; by PKB/AKT1. Acidic residues predominate over residues 142–153 (IPEEEDDEDDED). Residues 242 to 290 (WGNLSYADLITRAIESSPDRRLTLSQIYEWMVSCVPYFKDKGNSNSSAG) constitute a DNA-binding region (fork-head).

Its subcellular location is the cytoplasm. It localises to the cytosol. In terms of biological role, transcription factor. In Homo sapiens (Human), this protein is Forkhead box protein O3B.